A 226-amino-acid polypeptide reads, in one-letter code: Ribosomal RNA small subunit methyltransferase G (226 aa).

S-adenosyl-L-methionine is bound by residues Gly95, Leu100, 146-147 (VE), and Arg159.

This sequence belongs to the methyltransferase superfamily. RNA methyltransferase RsmG family.

Its subcellular location is the cytoplasm. The catalysed reaction is guanosine(527) in 16S rRNA + S-adenosyl-L-methionine = N(7)-methylguanosine(527) in 16S rRNA + S-adenosyl-L-homocysteine. Its function is as follows. Specifically methylates the N7 position of guanine in position 527 of 16S rRNA. This Acidovorax sp. (strain JS42) protein is Ribosomal RNA small subunit methyltransferase G.